A 166-amino-acid chain; its full sequence is Myosin regulatory light chain 2, ventricular/cardiac muscle isoform (166 aa).

Ser-2 carries the post-translational modification N,N,N-trimethylserine. Residue Asn-14 is modified to Deamidated asparagine. Ser-19 is modified (phosphoserine). 3 EF-hand domains span residues 24 to 59 (TQIQEFKEAFTIMDQNRDGFIDKNDLRDTFAALGRV), 94 to 129 (DPEETILNAFKVFDPEGKGVLKADYIKEMLTTQAER), and 130 to 165 (FSKEEIDQMFAAFPPDVTGNLDYKNLVHIITHGEEK). Ca(2+) is bound by residues Asp-37, Asn-39, Asp-41, and Asp-48. Residue Thr-52 is modified to Phosphothreonine.

In terms of assembly, myosin is a hexamer of 2 heavy chains and 4 light chains. Interacts with MYOC. In terms of processing, N-terminus is methylated by METTL11A/NTM1. Phosphorylated by MYLK3 and MYLK2; promotes cardiac muscle contraction and function. Dephosphorylated by PPP1CB complexed to PPP1R12B. The phosphorylated form in adult is expressed as gradients across the heart from endocardium (low phosphorylation) to epicardium (high phosphorylation); regulates cardiac torsion and workload distribution.

It localises to the cytoplasm. It is found in the myofibril. The protein resides in the sarcomere. The protein localises to the a band. Its function is as follows. Contractile protein that plays a role in heart development and function. Following phosphorylation, plays a role in cross-bridge cycling kinetics and cardiac muscle contraction by increasing myosin lever arm stiffness and promoting myosin head diffusion; as a consequence of the increase in maximum contraction force and calcium sensitivity of contraction force. These events altogether slow down myosin kinetics and prolong duty cycle resulting in accumulated myosins being cooperatively recruited to actin binding sites to sustain thin filament activation as a means to fine-tune myofilament calcium sensitivity to force. During cardiogenesis plays an early role in cardiac contractility by promoting cardiac myofibril assembly. This Bos taurus (Bovine) protein is Myosin regulatory light chain 2, ventricular/cardiac muscle isoform.